Reading from the N-terminus, the 139-residue chain is Large ribosomal subunit protein mL54 (139 aa).

The transit peptide at 1 to 50 (MPFIESMAPLSRAITRGISQFSCYSNTLVLRSSRNSSSSLVKRSYVSSRV) directs the protein to the mitochondrion. A compositionally biased stretch (low complexity) spans 35-50 (NSSSSLVKRSYVSSRV). Residues 35 to 74 (NSSSSLVKRSYVSSRVSPKKPQHNSDATSSAQKVANKTHT) are disordered. Residues 58-74 (NSDATSSAQKVANKTHT) show a composition bias toward polar residues.

It belongs to the mitochondrion-specific ribosomal protein mL54 family. As to quaternary structure, component of the mitochondrial large ribosomal subunit (mt-LSU). Mature yeast 74S mitochondrial ribosomes consist of a small (37S) and a large (54S) subunit. The 37S small subunit contains a 15S ribosomal RNA (15S mt-rRNA) and at least 32 different proteins. The 54S large subunit contains a 21S rRNA (21S mt-rRNA) and at least 45 different proteins.

Its subcellular location is the mitochondrion. Component of the mitochondrial ribosome (mitoribosome), a dedicated translation machinery responsible for the synthesis of mitochondrial genome-encoded proteins, including at least some of the essential transmembrane subunits of the mitochondrial respiratory chain. The mitoribosomes are attached to the mitochondrial inner membrane and translation products are cotranslationally integrated into the membrane. mL54 may have a meiosis-specific role as it accumulates during the middle stage of sporulation. The chain is Large ribosomal subunit protein mL54 (mrpl37) from Schizosaccharomyces pombe (strain 972 / ATCC 24843) (Fission yeast).